Reading from the N-terminus, the 368-residue chain is Isopentenyl-diphosphate delta-isomerase (368 aa).

Residue 7-8 (RK) participates in substrate binding. Residues T65, 66 to 68 (GMT), S96, and N125 contribute to the FMN site. 96 to 98 (SQR) provides a ligand contact to substrate. Position 160 (Q160) interacts with substrate. E161 serves as a coordination point for Mg(2+). FMN contacts are provided by residues K193, S218, T223, 275–277 (GIR), and 296–297 (AL).

This sequence belongs to the IPP isomerase type 2 family. As to quaternary structure, homooctamer. Dimer of tetramers. It depends on FMN as a cofactor. Requires NADPH as cofactor. Mg(2+) serves as cofactor.

It localises to the cytoplasm. It carries out the reaction isopentenyl diphosphate = dimethylallyl diphosphate. Involved in the biosynthesis of isoprenoids. Catalyzes the 1,3-allylic rearrangement of the homoallylic substrate isopentenyl (IPP) to its allylic isomer, dimethylallyl diphosphate (DMAPP). In Saccharolobus solfataricus (strain ATCC 35092 / DSM 1617 / JCM 11322 / P2) (Sulfolobus solfataricus), this protein is Isopentenyl-diphosphate delta-isomerase.